Consider the following 201-residue polypeptide: Small ribosomal subunit protein uS4c (201 aa).

Positions 90–153 constitute an S4 RNA-binding domain; sequence MRLDNVIFRL…SSQNLVKRYL (64 aa).

This sequence belongs to the universal ribosomal protein uS4 family. As to quaternary structure, part of the 30S ribosomal subunit. Contacts protein S5. The interaction surface between S4 and S5 is involved in control of translational fidelity.

The protein localises to the plastid. Its subcellular location is the chloroplast. Its function is as follows. One of the primary rRNA binding proteins, it binds directly to 16S rRNA where it nucleates assembly of the body of the 30S subunit. With S5 and S12 plays an important role in translational accuracy. This Gracilaria tenuistipitata var. liui (Red alga) protein is Small ribosomal subunit protein uS4c (rps4).